Here is a 706-residue protein sequence, read N- to C-terminus: Elongation factor G (706 aa).

The tr-type G domain maps to 15–291; it reads LKTRNIGISA…GVLDYLASPV (277 aa). GTP contacts are provided by residues 24 to 31, 91 to 95, and 145 to 148; these read AHIDSGKT, DTPGH, and NKLD.

The protein belongs to the TRAFAC class translation factor GTPase superfamily. Classic translation factor GTPase family. EF-G/EF-2 subfamily.

The protein localises to the cytoplasm. Its function is as follows. Catalyzes the GTP-dependent ribosomal translocation step during translation elongation. During this step, the ribosome changes from the pre-translocational (PRE) to the post-translocational (POST) state as the newly formed A-site-bound peptidyl-tRNA and P-site-bound deacylated tRNA move to the P and E sites, respectively. Catalyzes the coordinated movement of the two tRNA molecules, the mRNA and conformational changes in the ribosome. The protein is Elongation factor G of Leptospira borgpetersenii serovar Hardjo-bovis (strain L550).